Here is a 300-residue protein sequence, read N- to C-terminus: tRNA pseudouridine synthase B (300 aa).

Asp-38 (nucleophile) is an active-site residue.

The protein belongs to the pseudouridine synthase TruB family. Type 1 subfamily.

It catalyses the reaction uridine(55) in tRNA = pseudouridine(55) in tRNA. Responsible for synthesis of pseudouridine from uracil-55 in the psi GC loop of transfer RNAs. This Dehalococcoides mccartyi (strain ATCC BAA-2100 / JCM 16839 / KCTC 5957 / BAV1) protein is tRNA pseudouridine synthase B.